The following is a 439-amino-acid chain: Ribosomal protein uS12 methylthiotransferase RimO (439 aa).

Residues 5–115 (PKIGFVSLGC…LIEAVHTHAP (111 aa)) form the MTTase N-terminal domain. [4Fe-4S] cluster-binding residues include Cys-14, Cys-50, Cys-79, Cys-146, Cys-150, and Cys-153. A Radical SAM core domain is found at 132–369 (LTPRHYSYLK…MGLQAQISTD (238 aa)). Positions 372–439 (QRFVGTEQQV…ESTEYDLIAD (68 aa)) constitute a TRAM domain.

It belongs to the methylthiotransferase family. RimO subfamily. The cofactor is [4Fe-4S] cluster.

The protein resides in the cytoplasm. The enzyme catalyses L-aspartate(89)-[ribosomal protein uS12]-hydrogen + (sulfur carrier)-SH + AH2 + 2 S-adenosyl-L-methionine = 3-methylsulfanyl-L-aspartate(89)-[ribosomal protein uS12]-hydrogen + (sulfur carrier)-H + 5'-deoxyadenosine + L-methionine + A + S-adenosyl-L-homocysteine + 2 H(+). In terms of biological role, catalyzes the methylthiolation of an aspartic acid residue of ribosomal protein uS12. The chain is Ribosomal protein uS12 methylthiotransferase RimO from Francisella tularensis subsp. novicida (strain U112).